Here is a 1040-residue protein sequence, read N- to C-terminus: Activated CDC42 kinase 1 (1040 aa).

Positions 1 to 110 (MQPEEGTGWL…PSPTPGGLAG (110 aa)) are SAM-like domain. The segment at 86-109 (EAEFPSHHSQSTFRKPSPTPGGLA) is disordered. Threonine 113 carries the phosphothreonine modification. One can recognise a Protein kinase domain in the interval 126–385 (LRLLEKLGDG…PTFVALRDFL (260 aa)). Residues 132–140 (LGDGSFGVV) and lysine 158 contribute to the ATP site. Aspartate 252 (proton acceptor) is an active-site residue. Phosphotyrosine; by SRC and autocatalysis is present on tyrosine 284. An SH3 domain is found at 388 to 448 (AQPTDMRALQ…PRNVVTSVAG (61 aa)). The segment at 505–527 (RPTQHLGRMKKPTYDPVSEDPDP) is disordered. Tyrosine 518 bears the Phosphotyrosine mark. Residues 623 to 652 (DWDARPLPPPPAYDDVAQDEDDFEVCSINS) are required for interaction with SRC. The segment at 632 to 635 (PPAY) is required for interaction with NEDD4. Positions 722 to 824 (TGQLTPSPTP…MPTTQSFASD (103 aa)) are disordered. Positions 733–876 (GDDKPQVPPR…PYLERYQRFL (144 aa)) are EBD domain. Pro residues-rich tracts occupy residues 738–749 (QVPPRVPIPPRP) and 772–783 (PSSPPRVPPREP). Over residues 802–812 (PLPHRLSSSPG) the composition is skewed to low complexity. Tyrosine 827 carries the post-translational modification Phosphotyrosine. Arginine 839 is subject to Omega-N-methylarginine. Phosphotyrosine occurs at positions 859 and 872. At serine 881 the chain carries Phosphoserine. Residues 881–957 (SPEEPAALPV…CPGDGQEAAR (77 aa)) are disordered. The span at 888 to 903 (LPVPPLLPPPSTPAPA) shows a compositional bias: pro residues. Residues 922–931 (NFSTNNSNPG) show a composition bias toward polar residues. The region spanning 958–998 (PADKVQMLQAMVHGVTTEECQAALRSHSWSIQRAAQYLKVE) is the UBA domain.

Belongs to the protein kinase superfamily. Tyr protein kinase family. Homodimer. Interacts with CDC42. Interacts with CSPG4 (activated). Interacts with MERTK (activated); stimulates autophosphorylation. May interact (phosphorylated) with HSP90AB1; maintains kinase activity. Interacts with NPHP1. Interacts with SNX9 (via SH3 domain). Interacts with SRC (via SH2 and SH3 domain). Interacts with EGFR, and this interaction is dependent on EGF stimulation and kinase activity of EGFR. Interacts (via kinase domain) with AKT1. Part of a collagen stimulated complex involved in cell migration composed of CDC42, CRK, TNK2 and BCAR1/p130cas. Interacts with BCAR1/p130cas via SH3 domains. Forms complexes with GRB2 and numerous receptor tyrosine kinases (RTK) including LTK, AXL or PDGFRL, in which GRB2 promotes RTK recruitment by TNK2. Interacts with NEDD4 (via WW3 domain). NEDD4L and EGF promote association with NEDD4. Mg(2+) is required as a cofactor. Autophosphorylation regulates kinase activity. Phosphorylation on Tyr-518 is required for interaction with SRC and is observed during association with clathrin-coated pits. In terms of processing, polyubiquitinated by NEDD4 and NEDD4L. Degradation can be induced by EGF and is lysosome-dependent.

It is found in the cell membrane. Its subcellular location is the nucleus. The protein localises to the endosome. The protein resides in the cell junction. It localises to the adherens junction. It is found in the cytoplasmic vesicle membrane. Its subcellular location is the cytoplasmic vesicle. The protein localises to the clathrin-coated vesicle. The protein resides in the membrane. It localises to the clathrin-coated pit. It is found in the cytoplasm. Its subcellular location is the cytosol. It carries out the reaction L-tyrosyl-[protein] + ATP = O-phospho-L-tyrosyl-[protein] + ADP + H(+). The enzyme catalyses L-seryl-[protein] + ATP = O-phospho-L-seryl-[protein] + ADP + H(+). The catalysed reaction is L-threonyl-[protein] + ATP = O-phospho-L-threonyl-[protein] + ADP + H(+). Non-receptor tyrosine-protein and serine/threonine-protein kinase that is implicated in cell spreading and migration, cell survival, cell growth and proliferation. Transduces extracellular signals to cytosolic and nuclear effectors. Phosphorylates AKT1, AR, MCF2, WASL and WWOX. Implicated in trafficking and clathrin-mediated endocytosis through binding to epidermal growth factor receptor (EGFR) and clathrin. Binds to both poly- and mono-ubiquitin and regulates ligand-induced degradation of EGFR, thereby contributing to the accumulation of EGFR at the limiting membrane of early endosomes. Downstream effector of CDC42 which mediates CDC42-dependent cell migration via phosphorylation of BCAR1. May be involved both in adult synaptic function and plasticity and in brain development. Activates AKT1 by phosphorylating it on 'Tyr-176'. Phosphorylates AR on 'Tyr-267' and 'Tyr-363', thereby promoting its recruitment to androgen-responsive enhancers (AREs). Phosphorylates WWOX on 'Tyr-287'. Phosphorylates MCF2, thereby enhancing its activity as a guanine nucleotide exchange factor (GEF) toward Rho family proteins. Contributes to the control of AXL receptor levels. Confers metastatic properties on cancer cells and promotes tumor growth by negatively regulating tumor suppressor such as WWOX and positively regulating pro-survival factors such as AKT1 and AR. The protein is Activated CDC42 kinase 1 of Rattus norvegicus (Rat).